The chain runs to 1081 residues: MPRRNDLNKIMILGAGPIVIGQACEFDYSGTQACKALKEEGYEVVLVNSNPASIMTDPELADRTYIEPLIPEIVEKIIEKERPDAVLPTMGGQTALNLAVSLSKSGVLEKYGVELIGAKLPAIEMGEDRELFKEAMARIGVPVCPSGIASSIEEARQVAHEIGSYPLIIRPAFTLAGTGGGIAYNQEEYEEMVQYGLDQSPMSQILVEKSLLGWKEYELEVMRDLADNVVIICSIENFDPMGVHTGDSITVAPAQTLTDKEYQRLRDYSIAIIREIGVETGGSNIQFSVNPANGDVIVIEMNPRVSRSSALASKATGFPIAKFAAKLAVGYTLNEISNDITKKTPASFEPTIDYVVTKIPRFAFEKFPGAEPILNTQMKSVGEAMAIGRTFQESFQKALRSLETGRFGFGCDRHETLPTLSHLRSQLRTPNPERVFSLHHAFNLGMTVEEIHELTAIDPWFLDKLEDLVKTEKYMKQRSLKDLTAADLRYIKQQGFGDRQIAFATKTTEDEVRAYRKSLGITPVYKVVDTCAAEFEAFTPYYYSTYEPEECEVLPSDKPKVMILGGGPNRIGQGIEFDYCCCHAAFSLSDAGYETIMVNSNPETVSTDYDTSDRLYFEPLTKEDVLNIIEAENPVGIIIQFGGQTPLKLAVPLQKYLNSPDCPVQTKIWGTSPDSIDTAEDRERFEKILHELEISQPPNGIARDYEESRVVANRISYPVVVRPSYVLGGRAMEIVYSDEELERYMTYAVQIEPDHPILIDKFLENAIEVDVDSLTDSTGKVVIGSIMEHIEEAGIHSGDSACSIPYTSLSDNVLTTIRQWTEQLARALNVVGLMNIQYAVQGDQVYILEANPRASRTVPYVSKATGRPLAKIASLVMSGKTLEELGVTEEFIPQHVAVKEAVLPFSKFPGADTLLGPEMRSTGEVMGIDSDFGKAFAKAELGAGVILATTGTVFVSMSDRTKEAAVPVVRELIDLGFKVVATSGTQKVLREHGIEGVEVVLKLHEGRPHVIDWIKNGQIQFIINTPSGEESQLDGRTIRRAALDYKLPIITTIAGGKATVAALRSLQDHPLDVKALQDYLG.

The interval 1-403 (MPRRNDLNKI…SFQKALRSLE (403 aa)) is carboxyphosphate synthetic domain. R129, R170, G177, K209, L211, E216, G242, V243, H244, Q286, and E300 together coordinate ATP. The 197-residue stretch at 133 to 329 (KEAMARIGVP…IAKFAAKLAV (197 aa)) folds into the ATP-grasp 1 domain. Q286, E300, and N302 together coordinate Mg(2+). Q286, E300, and N302 together coordinate Mn(2+). Residues 404–553 (TGRFGFGCDR…STYEPEECEV (150 aa)) form an oligomerization domain region. Positions 554 to 944 (LPSDKPKVMI…AFAKAELGAG (391 aa)) are carbamoyl phosphate synthetic domain. The ATP-grasp 2 domain maps to 686–878 (EKILHELEIS…LAKIASLVMS (193 aa)). Residues R722, K761, L763, E768, G794, I795, H796, S797, Q837, and E849 each contribute to the ATP site. Mg(2+) is bound by residues Q837, E849, and N851. Mn(2+) is bound by residues Q837, E849, and N851. One can recognise an MGS-like domain in the interval 945 to 1081 (VILATTGTVF…DVKALQDYLG (137 aa)). The tract at residues 945-1081 (VILATTGTVF…DVKALQDYLG (137 aa)) is allosteric domain.

The protein belongs to the CarB family. Composed of two chains; the small (or glutamine) chain promotes the hydrolysis of glutamine to ammonia, which is used by the large (or ammonia) chain to synthesize carbamoyl phosphate. Tetramer of heterodimers (alpha,beta)4. Mg(2+) serves as cofactor. Mn(2+) is required as a cofactor.

It carries out the reaction hydrogencarbonate + L-glutamine + 2 ATP + H2O = carbamoyl phosphate + L-glutamate + 2 ADP + phosphate + 2 H(+). It catalyses the reaction hydrogencarbonate + NH4(+) + 2 ATP = carbamoyl phosphate + 2 ADP + phosphate + 2 H(+). It functions in the pathway amino-acid biosynthesis; L-arginine biosynthesis; carbamoyl phosphate from bicarbonate: step 1/1. Its pathway is pyrimidine metabolism; UMP biosynthesis via de novo pathway; (S)-dihydroorotate from bicarbonate: step 1/3. In terms of biological role, large subunit of the glutamine-dependent carbamoyl phosphate synthetase (CPSase). CPSase catalyzes the formation of carbamoyl phosphate from the ammonia moiety of glutamine, carbonate, and phosphate donated by ATP, constituting the first step of 2 biosynthetic pathways, one leading to arginine and/or urea and the other to pyrimidine nucleotides. The large subunit (synthetase) binds the substrates ammonia (free or transferred from glutamine from the small subunit), hydrogencarbonate and ATP and carries out an ATP-coupled ligase reaction, activating hydrogencarbonate by forming carboxy phosphate which reacts with ammonia to form carbamoyl phosphate. The chain is Carbamoyl phosphate synthase large chain from Synechocystis sp. (strain ATCC 27184 / PCC 6803 / Kazusa).